The following is a 296-amino-acid chain: Light-independent protochlorophyllide reductase iron-sulfur ATP-binding protein (296 aa).

Residues 39 to 44 (GIGKST) and lysine 68 each bind ATP. Serine 43 contacts Mg(2+). [4Fe-4S] cluster is bound by residues cysteine 124 and cysteine 158. Position 209–210 (209–210 (NR)) interacts with ATP.

This sequence belongs to the NifH/BchL/ChlL family. Homodimer. Protochlorophyllide reductase is composed of three subunits; ChlL, ChlN and ChlB. It depends on [4Fe-4S] cluster as a cofactor.

The catalysed reaction is chlorophyllide a + oxidized 2[4Fe-4S]-[ferredoxin] + 2 ADP + 2 phosphate = protochlorophyllide a + reduced 2[4Fe-4S]-[ferredoxin] + 2 ATP + 2 H2O. Its pathway is porphyrin-containing compound metabolism; chlorophyll biosynthesis (light-independent). Component of the dark-operative protochlorophyllide reductase (DPOR) that uses Mg-ATP and reduced ferredoxin to reduce ring D of protochlorophyllide (Pchlide) to form chlorophyllide a (Chlide). This reaction is light-independent. The L component serves as a unique electron donor to the NB-component of the complex, and binds Mg-ATP. This is Light-independent protochlorophyllide reductase iron-sulfur ATP-binding protein from Prochlorococcus marinus (strain MIT 9211).